A 142-amino-acid polypeptide reads, in one-letter code: Hemoglobin subunit alpha-A (142 aa).

Residues 2–142 (VLSAADKTNV…VATVLTAKYR (141 aa)) enclose the Globin domain. Histidine 59 is a binding site for O2. Histidine 88 contacts heme b.

Belongs to the globin family. Heterotetramer of two alpha chains and two beta chains. As to expression, red blood cells.

Involved in oxygen transport from the lung to the various peripheral tissues. The protein is Hemoglobin subunit alpha-A (HBAA) of Apus apus (Common swift).